The chain runs to 192 residues: Ribosomal RNA small subunit methyltransferase G (192 aa).

S-adenosyl-L-methionine is bound by residues G63, L68, I112 to E113, and R125.

It belongs to the methyltransferase superfamily. RNA methyltransferase RsmG family.

The protein resides in the cytoplasm. The enzyme catalyses guanosine(527) in 16S rRNA + S-adenosyl-L-methionine = N(7)-methylguanosine(527) in 16S rRNA + S-adenosyl-L-homocysteine. In terms of biological role, specifically methylates the N7 position of guanine in position 527 of 16S rRNA. In Rickettsia rickettsii (strain Iowa), this protein is Ribosomal RNA small subunit methyltransferase G.